Reading from the N-terminus, the 355-residue chain is MSFDVLTINPGSTSTKLAVYQGDKVLFEETVRHTMQELADFNNVQEQFDFRWQVLRRVMDAHGYDVKKLQAVVGRGGLLRPVAGGTYMVTEKMIDDLKENKYGEHASNLGAMLAKKLADELTIPSFIVDPVVVDEMQEIARISGNAFVTRKSIFHALNHKAAGRKIAKELGKDYEKMNFVIAHLGGGISVAAHRQGKAVDVNNALDGDGPFSPERSGSLPMNDFLEACFSGKWTKRELHELIVGRGGMISYLGTNSMLEVEAKVQAGEEKAIEAFDAMAYQVSKEIGACSVVLQGKVDAIILTGGLARSELFTSKIIEQTNWITSVIIEPGEDELEALNSGVQRVLAGLEKEKEY.

It belongs to the acetokinase family.

The protein localises to the cytoplasm. The catalysed reaction is butanoate + ATP = butanoyl phosphate + ADP. The protein is Probable butyrate kinase of Listeria monocytogenes serovar 1/2a (strain ATCC BAA-679 / EGD-e).